The primary structure comprises 62 residues: Large ribosomal subunit protein uL30 (62 aa).

The protein belongs to the universal ribosomal protein uL30 family. In terms of assembly, part of the 50S ribosomal subunit.

The chain is Large ribosomal subunit protein uL30 from Hydrogenovibrio crunogenus (strain DSM 25203 / XCL-2) (Thiomicrospira crunogena).